The sequence spans 98 residues: MKHEIKHDPAFRALTPKWHHGYRFQYEPAQKAHVVLYPEGMIKLNDSASLIGGLIDGERTIAAIIAELQREFPNIPELGMDVDDFMKVAKEKYWIDLV.

It belongs to the PqqD family. Monomer. Interacts with PqqE.

Its pathway is cofactor biosynthesis; pyrroloquinoline quinone biosynthesis. Functionally, functions as a PqqA binding protein and presents PqqA to PqqE, in the pyrroloquinoline quinone (PQQ) biosynthetic pathway. This Pseudomonas syringae pv. tomato (strain ATCC BAA-871 / DC3000) protein is PqqA binding protein.